We begin with the raw amino-acid sequence, 417 residues long: uncharacterized protein (417 aa).

4 consecutive transmembrane segments (helical) span residues Leu87 to Ile107, Ile130 to Val150, Phe177 to Ala197, and Ile202 to Asp222. The span at Ala366–Thr398 shows a compositional bias: low complexity. The tract at residues Ala366 to Trp417 is disordered.

It belongs to the YccS/YhfK family.

The protein localises to the cell membrane. This is an uncharacterized protein from Neisseria gonorrhoeae.